Consider the following 288-residue polypeptide: Proteasome assembly chaperone 1 (288 aa).

Residue alanine 2 is modified to N-acetylalanine. The segment at 12–38 (TPCRAGTEEEEEEEDGNRETPEDREVR) is disordered. The residue at position 18 (threonine 18) is a Phosphothreonine. Residues 28–38 (NRETPEDREVR) show a composition bias toward basic and acidic residues. Residue threonine 54 is modified to Phosphothreonine. At serine 180 the chain carries Phosphoserine. Position 264 is an N6-acetyllysine (lysine 264).

Belongs to the PSMG1 family. As to quaternary structure, forms a heterodimer with PSMG2. The PSMG1-PSMG2 heterodimer interacts directly with the PSMA5 and PSMA7 proteasome alpha subunits. In terms of processing, degraded by the proteasome upon completion of 20S proteasome maturation.

It is found in the cytoplasm. The protein localises to the endoplasmic reticulum. In terms of biological role, chaperone protein which promotes assembly of the 20S proteasome as part of a heterodimer with PSMG2. The PSMG1-PSMG2 heterodimer binds to the PSMA5 and PSMA7 proteasome subunits, promotes assembly of the proteasome alpha subunits into the heteroheptameric alpha ring and prevents alpha ring dimerization. The chain is Proteasome assembly chaperone 1 from Bos taurus (Bovine).